Consider the following 214-residue polypeptide: Adenylate kinase (214 aa).

Residue 10-15 coordinates ATP; sequence GAGKGT. Positions 30–59 are NMP; the sequence is STGDMLRAAIKAGSELGQKAKILMDMGQLV. Residues Thr-31, Arg-36, 57-59, 85-88, and Gln-92 contribute to the AMP site; these read QLV and GFPR. The tract at residues 122-159 is LID; that stretch reads GRRVHPASGRTYHIVYNPPKVEDKDDITGEDLILRADD. Residues Arg-123 and 132 to 133 contribute to the ATP site; that span reads TY. AMP contacts are provided by Arg-156 and Arg-167. Gln-200 contributes to the ATP binding site.

This sequence belongs to the adenylate kinase family. Monomer.

The protein localises to the cytoplasm. The catalysed reaction is AMP + ATP = 2 ADP. The protein operates within purine metabolism; AMP biosynthesis via salvage pathway; AMP from ADP: step 1/1. Catalyzes the reversible transfer of the terminal phosphate group between ATP and AMP. Plays an important role in cellular energy homeostasis and in adenine nucleotide metabolism. The sequence is that of Adenylate kinase from Histophilus somni (strain 129Pt) (Haemophilus somnus).